A 130-amino-acid polypeptide reads, in one-letter code: B1 protein (130 aa).

The first 12 residues, 1–12 (LTSLILLVAVQA), serve as a signal peptide directing secretion. Intrachain disulfides connect C28–C59 and C99–C116.

It belongs to the PBP/GOBP family. N-glycosylated. Tubular accessory sex gland.

Its subcellular location is the secreted. Functionally, may be a carrier protein for lipids. The sequence is that of B1 protein from Tenebrio molitor (Yellow mealworm beetle).